The chain runs to 179 residues: Putative BPIFA4P protein (179 aa).

An N-terminal signal peptide occupies residues 1–20 (MLNVSGLFVLLCGLLVSSSA).

This sequence belongs to the BPI/LBP/Plunc superfamily. Plunc family. As to expression, expressed in breast cancer and salivary gland.

The protein localises to the secreted. Functionally, major protein in sweat, has surfactant properties. This Homo sapiens (Human) protein is Putative BPIFA4P protein (BPIFA4P).